A 428-amino-acid chain; its full sequence is Glutamate-1-semialdehyde 2,1-aminomutase 2 (428 aa).

The residue at position 267 (K267) is an N6-(pyridoxal phosphate)lysine.

The protein belongs to the class-III pyridoxal-phosphate-dependent aminotransferase family. HemL subfamily. As to quaternary structure, homodimer. Pyridoxal 5'-phosphate is required as a cofactor.

The protein resides in the cytoplasm. It carries out the reaction (S)-4-amino-5-oxopentanoate = 5-aminolevulinate. The protein operates within porphyrin-containing compound metabolism; protoporphyrin-IX biosynthesis; 5-aminolevulinate from L-glutamyl-tRNA(Glu): step 2/2. The polypeptide is Glutamate-1-semialdehyde 2,1-aminomutase 2 (Oceanobacillus iheyensis (strain DSM 14371 / CIP 107618 / JCM 11309 / KCTC 3954 / HTE831)).